A 545-amino-acid chain; its full sequence is CTP synthase (545 aa).

Positions 1–266 are amidoligase domain; that stretch reads MTTNYIFVTG…DDYICKRFSL (266 aa). Residue Ser-14 participates in CTP binding. Ser-14 provides a ligand contact to UTP. ATP is bound by residues 15–20 and Asp-72; that span reads SLGKGI. Asp-72 and Glu-140 together coordinate Mg(2+). CTP-binding positions include 147–149, 187–192, and Lys-223; these read DIE and KTKPTQ. UTP is bound by residues 187–192 and Lys-223; that span reads KTKPTQ. Position 239–241 (239–241) interacts with ATP; sequence KDV. Residues 291–542 enclose the Glutamine amidotransferase type-1 domain; that stretch reads NIGMVGKYVE…VKAASEYQKR (252 aa). L-glutamine is bound at residue Gly-352. Cys-379 serves as the catalytic Nucleophile; for glutamine hydrolysis. Residues 380–383, Glu-403, and Arg-470 each bind L-glutamine; that span reads LGMQ. Residues His-515 and Glu-517 contribute to the active site.

The protein belongs to the CTP synthase family. As to quaternary structure, homotetramer.

The enzyme catalyses UTP + L-glutamine + ATP + H2O = CTP + L-glutamate + ADP + phosphate + 2 H(+). It catalyses the reaction L-glutamine + H2O = L-glutamate + NH4(+). The catalysed reaction is UTP + NH4(+) + ATP = CTP + ADP + phosphate + 2 H(+). The protein operates within pyrimidine metabolism; CTP biosynthesis via de novo pathway; CTP from UDP: step 2/2. Allosterically activated by GTP, when glutamine is the substrate; GTP has no effect on the reaction when ammonia is the substrate. The allosteric effector GTP functions by stabilizing the protein conformation that binds the tetrahedral intermediate(s) formed during glutamine hydrolysis. Inhibited by the product CTP, via allosteric rather than competitive inhibition. Catalyzes the ATP-dependent amination of UTP to CTP with either L-glutamine or ammonia as the source of nitrogen. Regulates intracellular CTP levels through interactions with the four ribonucleotide triphosphates. The polypeptide is CTP synthase (Erwinia tasmaniensis (strain DSM 17950 / CFBP 7177 / CIP 109463 / NCPPB 4357 / Et1/99)).